Reading from the N-terminus, the 348-residue chain is Protein pelota homolog (348 aa).

Belongs to the eukaryotic release factor 1 family. Pelota subfamily. As to quaternary structure, monomer. Requires a divalent metal cation as cofactor.

The protein resides in the cytoplasm. In terms of biological role, may function in recognizing stalled ribosomes, interact with stem-loop structures in stalled mRNA molecules, and effect endonucleolytic cleavage of the mRNA. May play a role in the release non-functional ribosomes and degradation of damaged mRNAs. Has endoribonuclease activity. The protein is Protein pelota homolog of Methanococcus maripaludis (strain C5 / ATCC BAA-1333).